Consider the following 353-residue polypeptide: Protein RecA (353 aa).

Residue 65-72 (GPESSGKT) participates in ATP binding.

It belongs to the RecA family.

The protein localises to the cytoplasm. Functionally, can catalyze the hydrolysis of ATP in the presence of single-stranded DNA, the ATP-dependent uptake of single-stranded DNA by duplex DNA, and the ATP-dependent hybridization of homologous single-stranded DNAs. It interacts with LexA causing its activation and leading to its autocatalytic cleavage. In Aeromonas salmonicida (strain A449), this protein is Protein RecA.